The sequence spans 409 residues: Putative competence-damage inducible protein (409 aa).

This sequence belongs to the CinA family.

The protein is Putative competence-damage inducible protein of Clostridium botulinum (strain ATCC 19397 / Type A).